Reading from the N-terminus, the 287-residue chain is Elongation factor Ts (287 aa).

The interval 80-83 is involved in Mg(2+) ion dislocation from EF-Tu; it reads TDFL.

It belongs to the EF-Ts family.

It localises to the cytoplasm. In terms of biological role, associates with the EF-Tu.GDP complex and induces the exchange of GDP to GTP. It remains bound to the aminoacyl-tRNA.EF-Tu.GTP complex up to the GTP hydrolysis stage on the ribosome. The protein is Elongation factor Ts of Pseudomonas putida (strain ATCC 47054 / DSM 6125 / CFBP 8728 / NCIMB 11950 / KT2440).